The sequence spans 505 residues: Protein amnionless (505 aa).

A signal peptide spans 1–20 (MGLHWQWLIWALVGLHVALA). Over 21-344 (TKWYGGGMDF…RPYNPNVSFS (324 aa)) the chain is Extracellular. A helical transmembrane segment spans residues 345–365 (SIVLILFCMALVGLVSVVILA). Topologically, residues 366 to 505 (HFMPENPYLN…CEADTDEETI (140 aa)) are cytoplasmic. Residues 451-482 (GALEEAAKESQEQDEILSVPKMETGDLDARSV) are disordered. A compositionally biased stretch (basic and acidic residues) spans 473–482 (ETGDLDARSV).

Specifically expressed in nephrocytes.

It is found in the cell membrane. Its function is as follows. Required in the nephrocyte for normal uptake of proteins and elimination of toxins, and for maintenance of endocytic trafficking structures. May function together with Cubn. The chain is Protein amnionless from Drosophila melanogaster (Fruit fly).